A 1399-amino-acid polypeptide reads, in one-letter code: DNA-directed RNA polymerase subunit beta' (1399 aa).

Positions 70, 72, 85, and 88 each coordinate Zn(2+). The Mg(2+) site is built by D460, D462, and D464. Residues C814, C888, C895, and C898 each contribute to the Zn(2+) site.

This sequence belongs to the RNA polymerase beta' chain family. The RNAP catalytic core consists of 2 alpha, 1 beta, 1 beta' and 1 omega subunit. When a sigma factor is associated with the core the holoenzyme is formed, which can initiate transcription. Requires Mg(2+) as cofactor. Zn(2+) serves as cofactor.

It catalyses the reaction RNA(n) + a ribonucleoside 5'-triphosphate = RNA(n+1) + diphosphate. Its function is as follows. DNA-dependent RNA polymerase catalyzes the transcription of DNA into RNA using the four ribonucleoside triphosphates as substrates. This Stutzerimonas stutzeri (strain A1501) (Pseudomonas stutzeri) protein is DNA-directed RNA polymerase subunit beta'.